Consider the following 396-residue polypeptide: Large ribosomal subunit protein uL24m (396 aa).

Residues 374–396 (QLSLGGGQEDAATTTSPEQPKVV) are disordered. The span at 384 to 396 (AATTTSPEQPKVV) shows a compositional bias: polar residues.

Belongs to the universal ribosomal protein uL24 family. As to quaternary structure, component of the mitochondrial large ribosomal subunit (mt-LSU). Mature N.crassa 74S mitochondrial ribosomes consist of a small (37S) and a large (54S) subunit. The 37S small subunit contains a 16S ribosomal RNA (16S mt-rRNA) and 32 different proteins. The 54S large subunit contains a 23S rRNA (23S mt-rRNA) and 42 different proteins. uL24m forms the wall of the exit tunnel.

It is found in the mitochondrion. Its function is as follows. Component of the mitochondrial ribosome (mitoribosome), a dedicated translation machinery responsible for the synthesis of mitochondrial genome-encoded proteins, including at least some of the essential transmembrane subunits of the mitochondrial respiratory chain. The mitoribosomes are attached to the mitochondrial inner membrane and translation products are cotranslationally integrated into the membrane. The protein is Large ribosomal subunit protein uL24m (mrpl40) of Neurospora crassa (strain ATCC 24698 / 74-OR23-1A / CBS 708.71 / DSM 1257 / FGSC 987).